The chain runs to 267 residues: Hydroxyacylglutathione hydrolase (267 aa).

His-55, His-57, Asp-59, His-60, His-121, Asp-138, and His-176 together coordinate Zn(2+).

It belongs to the metallo-beta-lactamase superfamily. Glyoxalase II family. Monomer. It depends on Zn(2+) as a cofactor.

The catalysed reaction is an S-(2-hydroxyacyl)glutathione + H2O = a 2-hydroxy carboxylate + glutathione + H(+). It participates in secondary metabolite metabolism; methylglyoxal degradation; (R)-lactate from methylglyoxal: step 2/2. Its function is as follows. Thiolesterase that catalyzes the hydrolysis of S-D-lactoyl-glutathione to form glutathione and D-lactic acid. The protein is Hydroxyacylglutathione hydrolase of Shewanella sp. (strain ANA-3).